The chain runs to 459 residues: Phosphomethylpyrimidine synthase (459 aa).

Substrate-binding positions include N81, M110, Y140, H176, 196–198 (SRG), 237–240 (DSLR), and E276. A Zn(2+)-binding site is contributed by H280. Substrate is bound at residue Y303. H344 contacts Zn(2+). [4Fe-4S] cluster is bound by residues C424, C427, and C432.

Belongs to the ThiC family. [4Fe-4S] cluster serves as cofactor.

The catalysed reaction is 5-amino-1-(5-phospho-beta-D-ribosyl)imidazole + S-adenosyl-L-methionine = 4-amino-2-methyl-5-(phosphooxymethyl)pyrimidine + CO + 5'-deoxyadenosine + formate + L-methionine + 3 H(+). It participates in cofactor biosynthesis; thiamine diphosphate biosynthesis. Its function is as follows. Catalyzes the synthesis of the hydroxymethylpyrimidine phosphate (HMP-P) moiety of thiamine from aminoimidazole ribotide (AIR) in a radical S-adenosyl-L-methionine (SAM)-dependent reaction. The protein is Phosphomethylpyrimidine synthase of Gloeobacter violaceus (strain ATCC 29082 / PCC 7421).